Reading from the N-terminus, the 314-residue chain is Bifunctional pinoresinol-lariciresinol reductase (314 aa).

NADP(+) contacts are provided by residues 10 to 16, arginine 35, and lysine 44; that span reads GGTGYIG. Lysine 138 (proton acceptor) is an active-site residue. Arginine 142 contributes to the NADP(+) binding site. Histidine 270 is a substrate binding site.

The protein belongs to the NmrA-type oxidoreductase family. Isoflavone reductase subfamily. Dimer.

The catalysed reaction is (+)-lariciresinol + NADP(+) = (+)-pinoresinol + NADPH + H(+). It carries out the reaction (+)-secoisolariciresinol + NADP(+) = (-)-lariciresinol + NADPH + H(+). Functionally, reductase involved in the lignan justicidin B biosynthesis. Catalyzes the enantioselective conversion of (+)-pinoresinol into (+)-lariciresinol and of (-)-lariciresinol into (+)-secoisolariciresinol. Low activity with the other enantiomers. Abstracts the 4R-hydride from the NADPH cofactor during catalysis. The protein is Bifunctional pinoresinol-lariciresinol reductase (PLR_Lp1) of Linum perenne (Perennial flax).